A 201-amino-acid chain; its full sequence is Small ribosomal subunit protein uS4c (201 aa).

The disordered stretch occupies residues 15-44 (LGALPGLTSKRPKTGNDLKNQSRSGKKSQY). In terms of domain architecture, S4 RNA-binding spans 89–150 (MRLDNILFRL…EKKSRTLIQN (62 aa)).

The protein belongs to the universal ribosomal protein uS4 family. Part of the 30S ribosomal subunit. Contacts protein S5. The interaction surface between S4 and S5 is involved in control of translational fidelity.

It is found in the plastid. Its subcellular location is the chloroplast. One of the primary rRNA binding proteins, it binds directly to 16S rRNA where it nucleates assembly of the body of the 30S subunit. In terms of biological role, with S5 and S12 plays an important role in translational accuracy. The chain is Small ribosomal subunit protein uS4c (rps4) from Cucumis sativus (Cucumber).